Consider the following 301-residue polypeptide: UDP-N-acetylenolpyruvoylglucosamine reductase 1 (301 aa).

In terms of domain architecture, FAD-binding PCMH-type spans 29–196 (KIGGPADILI…LEAVFQLQAG (168 aa)). Arg174 is an active-site residue. Ser225 (proton donor) is an active-site residue. Glu295 is a catalytic residue.

Belongs to the MurB family. FAD is required as a cofactor.

The protein resides in the cytoplasm. It carries out the reaction UDP-N-acetyl-alpha-D-muramate + NADP(+) = UDP-N-acetyl-3-O-(1-carboxyvinyl)-alpha-D-glucosamine + NADPH + H(+). Its pathway is cell wall biogenesis; peptidoglycan biosynthesis. Functionally, cell wall formation. This Bacillus cereus (strain ATCC 14579 / DSM 31 / CCUG 7414 / JCM 2152 / NBRC 15305 / NCIMB 9373 / NCTC 2599 / NRRL B-3711) protein is UDP-N-acetylenolpyruvoylglucosamine reductase 1 (murB1).